Here is a 174-residue protein sequence, read N- to C-terminus: Crossover junction endodeoxyribonuclease RuvC (174 aa).

Active-site residues include Asp16, Glu76, and Asp148. Residues Asp16, Glu76, and Asp148 each contribute to the Mg(2+) site.

Belongs to the RuvC family. In terms of assembly, homodimer which binds Holliday junction (HJ) DNA. The HJ becomes 2-fold symmetrical on binding to RuvC with unstacked arms; it has a different conformation from HJ DNA in complex with RuvA. In the full resolvosome a probable DNA-RuvA(4)-RuvB(12)-RuvC(2) complex forms which resolves the HJ. Mg(2+) serves as cofactor.

The protein localises to the cytoplasm. The catalysed reaction is Endonucleolytic cleavage at a junction such as a reciprocal single-stranded crossover between two homologous DNA duplexes (Holliday junction).. In terms of biological role, the RuvA-RuvB-RuvC complex processes Holliday junction (HJ) DNA during genetic recombination and DNA repair. Endonuclease that resolves HJ intermediates. Cleaves cruciform DNA by making single-stranded nicks across the HJ at symmetrical positions within the homologous arms, yielding a 5'-phosphate and a 3'-hydroxyl group; requires a central core of homology in the junction. The consensus cleavage sequence is 5'-(A/T)TT(C/G)-3'. Cleavage occurs on the 3'-side of the TT dinucleotide at the point of strand exchange. HJ branch migration catalyzed by RuvA-RuvB allows RuvC to scan DNA until it finds its consensus sequence, where it cleaves and resolves the cruciform DNA. This Rhodopseudomonas palustris (strain ATCC BAA-98 / CGA009) protein is Crossover junction endodeoxyribonuclease RuvC.